Consider the following 264-residue polypeptide: Forkhead box protein pes-1 (264 aa).

Disordered regions lie at residues 15–36 and 50–93; these read DLDN…GNSK and DSST…PTKR. Residues 50 to 64 are compositionally biased toward low complexity; sequence DSSTSSSCSVSPASS. Positions 70–89 are enriched in polar residues; it reads ESVGQQQSGRNSPVSSSTES. The fork-head DNA-binding region spans 93–186; sequence RPKYSYNALI…ISNNCGKLRR (94 aa).

It is found in the nucleus. It localises to the cytoplasm. Its function is as follows. Transcription factor. Plays a role in embryogenesis and later development, perhaps acting redundantly with forkhead protein fkh-2. In Caenorhabditis elegans, this protein is Forkhead box protein pes-1.